Consider the following 184-residue polypeptide: Leucine-rich repeat-containing protein 20 (184 aa).

LRR repeat units follow at residues 23-44 (GSDT…IYKV), 51-72 (QIHL…FMTT), 75-96 (QLRE…VSSL), 98-120 (HLRA…TTLP), 121-141 (ALET…EKLA), and 145-167 (ALRV…APPL). Position 175 is a phosphoserine (S175).

The sequence is that of Leucine-rich repeat-containing protein 20 (Lrrc20) from Mus musculus (Mouse).